A 462-amino-acid chain; its full sequence is MIVTRFAPSPTGYLHIGGLRTALFSYLWARKNGGKFLLRIEDTDKARNSQEAAEAIVKAFNWLGLEHDGEITYQSQRDDIYAIYVKQLLDEGKAYRCYMSREELDALRETQMANKERTKYDGKYRDFDGTPPDGVDSVIRIKAPLSGEIIVRDGVKGDVVFKAEDILDDFVIARADGSPTYNFVVAIDDHLMGVTEVIRGDDHLSNTPKQIVIYEALGFDVPKFYHVPMIHNSEGKKLSKRDGATDVMAYKEMGYTPAALLNFLVRLGWSNGDQEIFSMDEMRELFDPKNINRSASIYNTEKLDWLNSHYIKNTPNQELAKMLEEYNLTIASHDKKEILLDALKERAKTLKELALLVTEVINPPASYDEKALEKSLKGEAVEVLNNFIAKLSACKELHLPSEYHHVMQEVVDEMGIGFGKIGQPLRVALLGKMSGPGLDSVMAVIGIDETILRVKSALALVK.

Residues 8-18 carry the 'HIGH' region motif; that stretch reads PSPTGYLHIGG. Positions 237–241 match the 'KMSKS' region motif; the sequence is KLSKR. Residue Lys-240 participates in ATP binding.

It belongs to the class-I aminoacyl-tRNA synthetase family. Glutamate--tRNA ligase type 1 subfamily. In terms of assembly, monomer.

The protein resides in the cytoplasm. It carries out the reaction tRNA(Glu) + L-glutamate + ATP = L-glutamyl-tRNA(Glu) + AMP + diphosphate. In terms of biological role, catalyzes the attachment of glutamate to tRNA(Glu) in a two-step reaction: glutamate is first activated by ATP to form Glu-AMP and then transferred to the acceptor end of tRNA(Glu). This is Glutamate--tRNA ligase 1 from Sulfurimonas denitrificans (strain ATCC 33889 / DSM 1251) (Thiomicrospira denitrificans (strain ATCC 33889 / DSM 1251)).